Consider the following 317-residue polypeptide: Probable arabinan endo-1,5-alpha-L-arabinosidase C (317 aa).

The N-terminal stretch at 1–17 (MLSFLAALSLPLALVNA) is a signal peptide. Asp-32 serves as the catalytic Proton acceptor. Asn-190 is a glycosylation site (N-linked (GlcNAc...) asparagine). The active-site Proton donor is Glu-198.

Belongs to the glycosyl hydrolase 43 family.

It localises to the secreted. The enzyme catalyses Endohydrolysis of (1-&gt;5)-alpha-arabinofuranosidic linkages in (1-&gt;5)-arabinans.. Its pathway is glycan metabolism; L-arabinan degradation. In terms of biological role, endo-1,5-alpha-L-arabinanase involved in degradation of pectin. Its preferred substrate is linear 1,5-alpha-L-arabinan. The sequence is that of Probable arabinan endo-1,5-alpha-L-arabinosidase C (abnC) from Aspergillus flavus (strain ATCC 200026 / FGSC A1120 / IAM 13836 / NRRL 3357 / JCM 12722 / SRRC 167).